A 324-amino-acid chain; its full sequence is Ribose-phosphate pyrophosphokinase (324 aa).

ATP is bound by residues 45 to 47 (NGE) and 104 to 105 (RQ). Residues His138 and Asp178 each contribute to the Mg(2+) site. Residue Lys201 is part of the active site. D-ribose 5-phosphate-binding positions include Arg203, Asp229, and 233–237 (DTGGT).

This sequence belongs to the ribose-phosphate pyrophosphokinase family. Class I subfamily. In terms of assembly, homohexamer. Mg(2+) serves as cofactor.

It localises to the cytoplasm. It carries out the reaction D-ribose 5-phosphate + ATP = 5-phospho-alpha-D-ribose 1-diphosphate + AMP + H(+). The protein operates within metabolic intermediate biosynthesis; 5-phospho-alpha-D-ribose 1-diphosphate biosynthesis; 5-phospho-alpha-D-ribose 1-diphosphate from D-ribose 5-phosphate (route I): step 1/1. Functionally, involved in the biosynthesis of the central metabolite phospho-alpha-D-ribosyl-1-pyrophosphate (PRPP) via the transfer of pyrophosphoryl group from ATP to 1-hydroxyl of ribose-5-phosphate (Rib-5-P). The sequence is that of Ribose-phosphate pyrophosphokinase from Streptomyces coelicolor (strain ATCC BAA-471 / A3(2) / M145).